The sequence spans 170 residues: TFIIB-type zinc finger protein (170 aa).

Residues 1-30 (MECPVCGSNEIVWDNKNGEVVCSNCGIIID) form a TFIIB-type zinc finger. Residues Cys3, Cys6, Cys22, and Cys25 each contribute to the Zn(2+) site.

The protein belongs to the TFIIB family. Requires Zn(2+) as cofactor.

This Saccharolobus shibatae (strain ATCC 51178 / DSM 5389 / JCM 8931 / NBRC 15437 / B12) (Sulfolobus shibatae) protein is TFIIB-type zinc finger protein.